The chain runs to 44 residues: Tachystatin-A1 (44 aa).

3 disulfides stabilise this stretch: Cys-4–Cys-24, Cys-11–Cys-29, and Cys-23–Cys-41.

In terms of tissue distribution, granular hemocytes, small secretory granules.

It localises to the secreted. Functionally, exhibits stronger antimicrobial activity against the Gram-positive bacteria (S.aureus (IC(50) is 4.2 ug/ml)) and fungi (C.albicans (IC(50) is 3.0 ug/ml) and P.pastoris (IC(50) is 0.5 ug/ml)) than Gram-negative bacteria (E.coli (IC(50) is 25 ug/ml)). Binds to chitin (8.4 uM are required to obtain 50% of binding). Does not cause hemolysis on sheep erythrocytes. Has no blocking activity on the P-type calcium channel. The polypeptide is Tachystatin-A1 (Tachypleus tridentatus (Japanese horseshoe crab)).